The sequence spans 136 residues: uncharacterized protein (136 aa).

The interval 1-33 is disordered; it reads MRDHLPPGLPPDPFADDPCDPSAALEAVEPGQP.

It to M.leprae ML0386.

This is an uncharacterized protein from Mycobacterium tuberculosis (strain CDC 1551 / Oshkosh).